The chain runs to 500 residues: Phosphatidylserine decarboxylase proenzyme 1, mitochondrial (500 aa).

The transit peptide at 1–48 (MSIMPVKNALAQGRTLLMGRMPAVKFSTRMQLRNRTAVLWNRKFSTRL) directs the protein to the mitochondrion; not cleaved when targeted to the endoplasmic reticulum. N34 carries N-linked (GlcNAc...) asparagine glycosylation. The Mitochondrial matrix portion of the chain corresponds to 45–79 (STRLFVQQRRSSGEIVDRAKAAAANSGRKQVSMKW). Residues 57 to 101 (GEIVDRAKAAAANSGRKQVSMKWVVLTSFTIVLGTILLVSRNDST) form an enables targeting to the endoplasmic reticulum in addition to mitochondria region. The helical transmembrane segment at 80–98 (VVLTSFTIVLGTILLVSRN) threads the bilayer. Residues 99-500 (DSTEEDATEG…LGIIGKNDLK (402 aa)) lie on the Mitochondrial intermembrane side of the membrane. Active-site charge relay system; for autoendoproteolytic cleavage activity residues include D210, H348, and S463. S463 functions as the Schiff-base intermediate with substrate; via pyruvic acid; for decarboxylase activity in the catalytic mechanism. S463 bears the Pyruvic acid (Ser); by autocatalysis mark. The segment at 475–492 (FKFDVRVGDKVKMGQKLG) is required for processing and stability.

It belongs to the phosphatidylserine decarboxylase family. PSD-B subfamily. Eukaryotic type I sub-subfamily. Heterodimer of a large membrane-associated beta subunit and a small pyruvoyl-containing alpha subunit. Pyruvate is required as a cofactor. Glycosylated at Asn-34 in the endoplasmic reticulum. Post-translationally, the precursor is imported via the TOM complex into mitochondria, where the N-terminal presequence is cleaved by the matrix-located proteases MPP (MAS1-MAS2) and OCT1. In terms of processing, is synthesized initially as an inactive proenzyme. Formation of the active enzyme involves a self-maturation process in which the active site pyruvoyl group is generated from an internal serine residue via an autocatalytic post-translational modification. Two non-identical subunits are generated from the proenzyme in this reaction, and the pyruvate is formed at the N-terminus of the alpha chain, which is derived from the carboxyl end of the proenzyme. The autoendoproteolytic cleavage occurs by a canonical serine protease mechanism, in which the side chain hydroxyl group of the serine supplies its oxygen atom to form the C-terminus of the beta chain, while the remainder of the serine residue undergoes an oxidative deamination to produce ammonia and the pyruvoyl prosthetic group on the alpha chain. During this reaction, the Ser that is part of the protease active site of the proenzyme becomes the pyruvoyl prosthetic group, which constitutes an essential element of the active site of the mature decarboxylase.

The protein localises to the mitochondrion inner membrane. The protein resides in the lipid droplet. It is found in the endoplasmic reticulum membrane. It carries out the reaction a 1,2-diacyl-sn-glycero-3-phospho-L-serine + H(+) = a 1,2-diacyl-sn-glycero-3-phosphoethanolamine + CO2. It functions in the pathway phospholipid metabolism; phosphatidylethanolamine biosynthesis; phosphatidylethanolamine from CDP-diacylglycerol: step 2/2. Functionally, catalyzes the formation of phosphatidylethanolamine (PtdEtn) from phosphatidylserine (PtdSer). Plays a central role in phospholipid metabolism and in the interorganelle trafficking of phosphatidylserine. Phosphatidylethanolamine formed in the mitochondria is exported to other membranes to fullfill their requirements for PtdEtn. Required for normal mitochondrial morphology and proper mitochondrial fusion during yeast mating. Involved in lipid droplet biogenesis at the endoplasmic reticulum membrane. Required for induction of mitophagy during nitrogen starvation. Appears to play a specific role in supporting respiratory complex III activity. The protein is Phosphatidylserine decarboxylase proenzyme 1, mitochondrial of Saccharomyces cerevisiae (strain ATCC 204508 / S288c) (Baker's yeast).